The sequence spans 427 residues: 3-phosphoshikimate 1-carboxyvinyltransferase (427 aa).

The 3-phosphoshikimate site is built by Lys20, Ser21, and Arg25. Phosphoenolpyruvate is bound at residue Lys20. Positions 92 and 120 each coordinate phosphoenolpyruvate. 3-phosphoshikimate is bound by residues Ser166, Gln168, Asp312, and Lys339. Gln168 is a binding site for phosphoenolpyruvate. The Proton acceptor role is filled by Asp312. Arg343 and Arg385 together coordinate phosphoenolpyruvate.

It belongs to the EPSP synthase family. Monomer.

It is found in the cytoplasm. It catalyses the reaction 3-phosphoshikimate + phosphoenolpyruvate = 5-O-(1-carboxyvinyl)-3-phosphoshikimate + phosphate. The protein operates within metabolic intermediate biosynthesis; chorismate biosynthesis; chorismate from D-erythrose 4-phosphate and phosphoenolpyruvate: step 6/7. Functionally, catalyzes the transfer of the enolpyruvyl moiety of phosphoenolpyruvate (PEP) to the 5-hydroxyl of shikimate-3-phosphate (S3P) to produce enolpyruvyl shikimate-3-phosphate and inorganic phosphate. In Streptococcus equi subsp. zooepidemicus (strain H70), this protein is 3-phosphoshikimate 1-carboxyvinyltransferase.